The following is a 160-amino-acid chain: Deoxyuridine 5'-triphosphate nucleotidohydrolase (160 aa).

Residues 72 to 74 (RSG), asparagine 85, and 89 to 91 (TID) contribute to the substrate site.

The protein belongs to the dUTPase family. The cofactor is Mg(2+).

It carries out the reaction dUTP + H2O = dUMP + diphosphate + H(+). The protein operates within pyrimidine metabolism; dUMP biosynthesis; dUMP from dCTP (dUTP route): step 2/2. In terms of biological role, this enzyme is involved in nucleotide metabolism: it produces dUMP, the immediate precursor of thymidine nucleotides and it decreases the intracellular concentration of dUTP so that uracil cannot be incorporated into DNA. This chain is Deoxyuridine 5'-triphosphate nucleotidohydrolase, found in Methylocella silvestris (strain DSM 15510 / CIP 108128 / LMG 27833 / NCIMB 13906 / BL2).